Reading from the N-terminus, the 290-residue chain is ATP synthase gamma chain (290 aa).

The protein belongs to the ATPase gamma chain family. In terms of assembly, F-type ATPases have 2 components, CF(1) - the catalytic core - and CF(0) - the membrane proton channel. CF(1) has five subunits: alpha(3), beta(3), gamma(1), delta(1), epsilon(1). CF(0) has three main subunits: a, b and c.

The protein localises to the cell membrane. Its function is as follows. Produces ATP from ADP in the presence of a proton gradient across the membrane. The gamma chain is believed to be important in regulating ATPase activity and the flow of protons through the CF(0) complex. The sequence is that of ATP synthase gamma chain from Wolbachia pipientis subsp. Culex pipiens (strain wPip).